A 332-amino-acid polypeptide reads, in one-letter code: Ribosomal RNA small subunit methyltransferase H (332 aa).

S-adenosyl-L-methionine is bound by residues Gly39–Tyr41, Asp56, Phe83, Asp100, and Gln107.

This sequence belongs to the methyltransferase superfamily. RsmH family.

It is found in the cytoplasm. The enzyme catalyses cytidine(1402) in 16S rRNA + S-adenosyl-L-methionine = N(4)-methylcytidine(1402) in 16S rRNA + S-adenosyl-L-homocysteine + H(+). Its function is as follows. Specifically methylates the N4 position of cytidine in position 1402 (C1402) of 16S rRNA. The sequence is that of Ribosomal RNA small subunit methyltransferase H from Bartonella quintana (strain Toulouse) (Rochalimaea quintana).